The primary structure comprises 78 residues: Acyl carrier protein (78 aa).

One can recognise a Carrier domain in the interval 2–77 (SDIASRVKAI…QAISYIEEAK (76 aa)). The residue at position 37 (S37) is an O-(pantetheine 4'-phosphoryl)serine.

The protein belongs to the acyl carrier protein (ACP) family. Post-translationally, 4'-phosphopantetheine is transferred from CoA to a specific serine of apo-ACP by AcpS. This modification is essential for activity because fatty acids are bound in thioester linkage to the sulfhydryl of the prosthetic group.

The protein localises to the cytoplasm. Its pathway is lipid metabolism; fatty acid biosynthesis. Carrier of the growing fatty acid chain in fatty acid biosynthesis. In Flavobacterium johnsoniae (strain ATCC 17061 / DSM 2064 / JCM 8514 / BCRC 14874 / CCUG 350202 / NBRC 14942 / NCIMB 11054 / UW101) (Cytophaga johnsonae), this protein is Acyl carrier protein.